A 329-amino-acid chain; its full sequence is Cathepsin K (329 aa).

A signal peptide spans 1 to 15 (MWGLKVLLLPVVSFA). A propeptide spans 16–114 (LYPEEILDTH…TLYIPEWEGR (99 aa)) (activation peptide). Residue Asn-103 is glycosylated (N-linked (GlcNAc...) asparagine). Cystine bridges form between Cys-136-Cys-177, Cys-170-Cys-210, and Cys-269-Cys-318. Cys-139 is an active-site residue. Active-site residues include His-276 and Asn-296.

It belongs to the peptidase C1 family. Predominantly expressed in osteoclasts (bones). Expressed in thyroid epithelial cells.

It localises to the lysosome. It is found in the secreted. The protein localises to the apical cell membrane. The catalysed reaction is Broad proteolytic activity. With small-molecule substrates and inhibitors, the major determinant of specificity is P2, which is preferably Leu, Met &gt; Phe, and not Arg.. Thiol protease involved in osteoclastic bone resorption and may participate partially in the disorder of bone remodeling. Displays potent endoprotease activity against fibrinogen at acid pH. May play an important role in extracellular matrix degradation. Involved in the release of thyroid hormone thyroxine (T4) by limited proteolysis of TG/thyroglobulin in the thyroid follicle lumen. This is Cathepsin K (CTSK) from Homo sapiens (Human).